A 496-amino-acid chain; its full sequence is Probable cytosol aminopeptidase (496 aa).

Residues K258 and D263 each contribute to the Mn(2+) site. K270 is a catalytic residue. The Mn(2+) site is built by D281, D340, and E342. R344 is an active-site residue.

The protein belongs to the peptidase M17 family. Mn(2+) is required as a cofactor.

It localises to the cytoplasm. It catalyses the reaction Release of an N-terminal amino acid, Xaa-|-Yaa-, in which Xaa is preferably Leu, but may be other amino acids including Pro although not Arg or Lys, and Yaa may be Pro. Amino acid amides and methyl esters are also readily hydrolyzed, but rates on arylamides are exceedingly low.. The catalysed reaction is Release of an N-terminal amino acid, preferentially leucine, but not glutamic or aspartic acids.. Its function is as follows. Presumably involved in the processing and regular turnover of intracellular proteins. Catalyzes the removal of unsubstituted N-terminal amino acids from various peptides. In Helicobacter pylori (strain G27), this protein is Probable cytosol aminopeptidase.